The following is a 428-amino-acid chain: Type II methyltransferase M.BanI (428 aa).

An SAM-dependent MTase C5-type domain is found at 3–417 (IKFVDLFAGI…EDLFQNNVNE (415 aa)). Cysteine 76 is a catalytic residue.

Belongs to the class I-like SAM-binding methyltransferase superfamily. C5-methyltransferase family. As to quaternary structure, monomer.

It catalyses the reaction a 2'-deoxycytidine in DNA + S-adenosyl-L-methionine = a 5-methyl-2'-deoxycytidine in DNA + S-adenosyl-L-homocysteine + H(+). A methylase, recognizes the double-stranded sequence 5'-GGYRCC-3', methylates C-4 on both strands, and protects the DNA from cleavage by the BanI endonuclease. This chain is Type II methyltransferase M.BanI (banIM), found in Aneurinibacillus aneurinilyticus (Bacillus aneurinolyticus).